Here is a 130-residue protein sequence, read N- to C-terminus: Small ribosomal subunit protein uS9 (130 aa).

It belongs to the universal ribosomal protein uS9 family. Part of the 30S ribosomal subunit.

The chain is Small ribosomal subunit protein uS9 (rpsI) from Bacillus subtilis (strain 168).